A 196-amino-acid chain; its full sequence is Probable malonic semialdehyde reductase RutE (196 aa).

Belongs to the nitroreductase family. HadB/RutE subfamily. FMN serves as cofactor.

The enzyme catalyses 3-hydroxypropanoate + NADP(+) = 3-oxopropanoate + NADPH + H(+). Its function is as follows. May reduce toxic product malonic semialdehyde to 3-hydroxypropionic acid, which is excreted. This chain is Probable malonic semialdehyde reductase RutE, found in Escherichia coli O157:H7.